A 327-amino-acid chain; its full sequence is RPDRSHAKSARSVAETMGNYHPHGDASIYDTLVRMAQPWSMRYPLVDGQGNFGSPGNDPPAAMRYCITGDALVALPEGESVRIADIVPGARPNSDNAIDLKVLDRHGNPVLADRLFHSGEHPVYTVRTVEGLRVTGTANHPLLCLVDVAGVPTLLWKLIDEIKPGDYAVIQRSAFSVDCAGFARGKPEFAPTTYTVGVPGLVRFLEAHHRDPDAQAIADELTDGRFYYAKVASVTDAGVQPVYSLRVDTADHAFITNGFVSHNTEAPLTPLAMEMLREIDEETVDFIPNYDGRVQEPTVLPSRFPNLLANGSGGIAVGMATNIPPHN.

Residues 1–327 form the Topo IIA-type catalytic domain; sequence RPDRSHAKSA…GMATNIPPHN (327 aa). Tyrosine 65 (O-(5'-phospho-DNA)-tyrosine intermediate) is an active-site residue.

It belongs to the type II topoisomerase GyrA/ParC subunit family. In terms of assembly, heterotetramer, composed of two GyrA and two GyrB chains. In the heterotetramer, GyrA contains the active site tyrosine that forms a transient covalent intermediate with DNA, while GyrB binds cofactors and catalyzes ATP hydrolysis. This protein undergoes a protein self splicing that involves a post-translational excision of the intervening region (intein) followed by peptide ligation.

The protein localises to the cytoplasm. It catalyses the reaction ATP-dependent breakage, passage and rejoining of double-stranded DNA.. Its function is as follows. A type II topoisomerase that negatively supercoils closed circular double-stranded (ds) DNA in an ATP-dependent manner to modulate DNA topology and maintain chromosomes in an underwound state. Negative supercoiling favors strand separation, and DNA replication, transcription, recombination and repair, all of which involve strand separation. Also able to catalyze the interconversion of other topological isomers of dsDNA rings, including catenanes and knotted rings. Type II topoisomerases break and join 2 DNA strands simultaneously in an ATP-dependent manner. In Mycobacterium xenopi, this protein is DNA gyrase subunit A (gyrA).